The following is a 177-amino-acid chain: Large ribosomal subunit protein uL5 (177 aa).

This sequence belongs to the universal ribosomal protein uL5 family. As to quaternary structure, part of the 50S ribosomal subunit; part of the 5S rRNA/L5/L18/L25 subcomplex. Contacts the 5S rRNA and the P site tRNA. Forms a bridge to the 30S subunit in the 70S ribosome.

Functionally, this is one of the proteins that bind and probably mediate the attachment of the 5S RNA into the large ribosomal subunit, where it forms part of the central protuberance. In the 70S ribosome it contacts protein S13 of the 30S subunit (bridge B1b), connecting the 2 subunits; this bridge is implicated in subunit movement. Contacts the P site tRNA; the 5S rRNA and some of its associated proteins might help stabilize positioning of ribosome-bound tRNAs. This is Large ribosomal subunit protein uL5 from Wolbachia sp. subsp. Brugia malayi (strain TRS).